The sequence spans 544 residues: Esterase P (544 aa).

A signal peptide spans methionine 1–glutamate 19. The N-linked (GlcNAc...) asparagine glycan is linked to asparagine 75. A disulfide bridge links cysteine 83 with cysteine 102. Asparagine 114 carries an N-linked (GlcNAc...) asparagine glycan. The active-site Acyl-ester intermediate is the serine 206. Cysteines 258 and 270 form a disulfide. 2 N-linked (GlcNAc...) asparagine glycosylation sites follow: asparagine 262 and asparagine 456. Catalysis depends on histidine 466, which acts as the Charge relay system. A disulfide bond links cysteine 514 and cysteine 535.

This sequence belongs to the type-B carboxylesterase/lipase family. As to quaternary structure, monomer.

It is found in the secreted. The catalysed reaction is a carboxylic ester + H2O = an alcohol + a carboxylate + H(+). This Drosophila melanogaster (Fruit fly) protein is Esterase P (Est-P).